The primary structure comprises 76 residues: Esculentin-2MT2 (76 aa).

Residues 1–22 (MFTLKKSMLLLFFLGTISLSLC) form the signal peptide. The propeptide at 23 to 37 (EEERSADEDDGEKEV) is removed in mature form. Residues Cys-70 and Cys-76 are joined by a disulfide bond.

It belongs to the frog skin active peptide (FSAP) family. Esculentin subfamily. In terms of tissue distribution, expressed by the skin glands.

Its subcellular location is the secreted. Its function is as follows. Antimicrobial peptide. Active against a variety of Gram-negative and Gram-positive bacterial strains. Active against fungi. Shows strong hemolytic activity against human erythrocytes. The protein is Esculentin-2MT2 of Amolops mantzorum (Sichuan torrent frog).